The sequence spans 190 residues: Remorin (190 aa).

Residues 1 to 12 (MAEEQKTSKVDV) are compositionally biased toward basic and acidic residues. Disordered regions lie at residues 1–45 (MAEE…VESK) and 50–69 (VEKP…SADR). The residue at position 14 (serine 14) is a Phosphoserine. A Phosphothreonine modification is found at threonine 58. Residues 92 to 147 (EKSKAENRAQKKISDVHAWENSKKAAVEAQLRKIEEKLEKKKAQYGEKMKNKVAAI) adopt a coiled-coil conformation.

The protein belongs to the remorin family. In terms of assembly, may polymerize to form filamentous structures. In terms of tissue distribution, expressed in roots, leaves, stems, flowers and siliques, with a maximal expression in apical regions.

In terms of biological role, exhibits a non sequence-specific DNA-binding activity. This is Remorin (DBP) from Arabidopsis thaliana (Mouse-ear cress).